The sequence spans 933 residues: Protein translocase subunit SecA (933 aa).

Residues Gln90, 108–112, and Asp504 each bind ATP; that span reads GEGKT. The tract at residues 539–570 is disordered; sequence GMGSNNRRPQGFGQDSKKKKWQPSADIFPTDL.

The protein belongs to the SecA family. In terms of assembly, monomer and homodimer. Part of the essential Sec protein translocation apparatus which comprises SecA, SecYEG and auxiliary proteins SecDF. Other proteins may also be involved.

It is found in the cell inner membrane. The protein resides in the cellular thylakoid membrane. The protein localises to the cytoplasm. The enzyme catalyses ATP + H2O + cellular proteinSide 1 = ADP + phosphate + cellular proteinSide 2.. Functionally, part of the Sec protein translocase complex. Interacts with the SecYEG preprotein conducting channel. Has a central role in coupling the hydrolysis of ATP to the transfer of proteins into and across the cell membrane, serving as an ATP-driven molecular motor driving the stepwise translocation of polypeptide chains across the membrane. Its function is as follows. Probably participates in protein translocation into and across both the cytoplasmic and thylakoid membranes in cyanobacterial cells. The polypeptide is Protein translocase subunit SecA (Crocosphaera subtropica (strain ATCC 51142 / BH68) (Cyanothece sp. (strain ATCC 51142))).